The primary structure comprises 125 residues: Large ribosomal subunit protein bL12 (125 aa).

The protein belongs to the bacterial ribosomal protein bL12 family. In terms of assembly, homodimer. Part of the ribosomal stalk of the 50S ribosomal subunit. Forms a multimeric L10(L12)X complex, where L10 forms an elongated spine to which 2 to 4 L12 dimers bind in a sequential fashion. Binds GTP-bound translation factors.

In terms of biological role, forms part of the ribosomal stalk which helps the ribosome interact with GTP-bound translation factors. Is thus essential for accurate translation. The chain is Large ribosomal subunit protein bL12 from Delftia acidovorans (strain DSM 14801 / SPH-1).